Consider the following 259-residue polypeptide: UPF0246 protein Aave_1172 (259 aa).

It belongs to the UPF0246 family.

The protein is UPF0246 protein Aave_1172 of Paracidovorax citrulli (strain AAC00-1) (Acidovorax citrulli).